Consider the following 107-residue polypeptide: Keratin, type I cytoskeletal 20 (107 aa).

The head stretch occupies residues 1–7 (GNLWVGN). A coil 1A region spans residues 8-43 (EKMTMKNLNDRLASYLEKVRSLEQSNSKFELQIKQW). The IF rod domain maps to 8–107 (EKMTMKNLND…ETERGIRLAV (100 aa)). The tract at residues 44–61 (YESNTPGISRDHSAYLQQ) is linker 1. Residues 62 to 107 (IQDLRNQIRDAQLQNARCVLQIDNAKLAAEDFRLKYETERGIRLAV) are coil 1B.

This sequence belongs to the intermediate filament family. Heterotetramer of two type I and two type II keratins. Associates with KRT8.

In terms of biological role, plays a significant role in maintaining keratin filament organization in intestinal epithelia. When phosphorylated, plays a role in the secretion of mucin in the small intestine. The protein is Keratin, type I cytoskeletal 20 of Sus scrofa (Pig).